Consider the following 144-residue polypeptide: Large ribosomal subunit protein uL13 (144 aa).

The protein belongs to the universal ribosomal protein uL13 family. In terms of assembly, part of the 50S ribosomal subunit.

Its function is as follows. This protein is one of the early assembly proteins of the 50S ribosomal subunit, although it is not seen to bind rRNA by itself. It is important during the early stages of 50S assembly. This is Large ribosomal subunit protein uL13 from Clostridium kluyveri (strain NBRC 12016).